A 75-amino-acid chain; its full sequence is MKLLLFTALVLVVISLIEVEAENERACIPLEKECTKTPGNCCSGLKCNCYRRFEQGVAKGIQCWCIEKDVTYKGV.

A signal peptide spans 1–21; sequence MKLLLFTALVLVVISLIEVEA. Residues 22-25 constitute a propeptide that is removed on maturation; it reads ENER. 4 disulfides stabilise this stretch: cysteine 27-cysteine 42, cysteine 34-cysteine 47, cysteine 41-cysteine 65, and cysteine 49-cysteine 63.

Belongs to the neurotoxin 19 (CSTX) family. 06 (U6-Lctx) subfamily. In terms of tissue distribution, expressed by the venom gland.

The protein resides in the secreted. The sequence is that of U6-lycotoxin-Ls1c from Lycosa singoriensis (Wolf spider).